The sequence spans 1920 residues: rRNA biogenesis protein RRP5 (1920 aa).

The tract at residues 1–65 (MVVPQKKFAN…GTSLSKKERE (65 aa)) is disordered. S1 motif domains are found at residues 128-210 (GMKL…LSLR), 226-291 (GMVF…LSSD), 314-384 (GMMV…LTLS), 400-473 (GDIF…GTLK), 490-557 (GMVT…VTYK), 577-646 (GLVT…LSFM), 661-733 (GSIV…LSSK), 753-822 (NSVV…LSLK), 866-930 (GSLI…LSLR), 958-1031 (EVHQ…LLLD), 1054-1129 (GSVV…LSVK), 1153-1224 (GQCV…LVQR), 1260-1334 (GDIL…LSLR), 1369-1438 (DMGV…VTLK), and 1459-1529 (GDMI…LGMK). Disordered stretches follow at residues 1535-1555 (NGDD…ECDP) and 1605-1652 (TDFD…LEHH). Positions 1620 to 1652 (NKDEKSKRREKQKDKEEREKKIQAAEGRLLEHH) are enriched in basic and acidic residues. HAT repeat units follow at residues 1651 to 1683 (HHAP…FMLS), 1685 to 1722 (ADIE…LENE), 1726 to 1758 (PPEE…YERT), 1759 to 1791 (EQYK…SSLK), 1828 to 1860 (GVAD…QEIR), and 1862 to 1897 (GEDD…YEKS).

As to expression, highly expressed in flowers and at lower levels in roots, leaves, stems and siliques.

It is found in the nucleus. The protein localises to the nucleolus. Its function is as follows. Involved in the biogenesis of ribosomal RNA (rRNA). Required for the formation of 5.8S rRNA. Required for normal development of female gametophytes. The protein is rRNA biogenesis protein RRP5 of Arabidopsis thaliana (Mouse-ear cress).